A 308-amino-acid chain; its full sequence is CMP-N-acetylneuraminate:beta-galactoside alpha-2,3-sialyltransferase (308 aa).

The active-site Proton acceptor is the Asp201. Residues 221 to 225 (LPHPR), 242 to 243 (FE), and 262 to 263 (SS) each bind CMP-N-acetyl-beta-neuraminate. The active-site Proton donor is His223.

This sequence belongs to the glycosyltransferase 52 family. Divalent metal cations are not required for the alpha-2,3-sialyltransferase activity. serves as cofactor.

Functionally, catalyzes the transfer of sialic acid from the substrate CMP-N-acetylneuraminate to lactosyl lipids as preferred acceptor substrates in vitro, forming alpha-2,3-linked sialosides. Beta-1,4-linked galactosyl lipids are better substrates than beta-1,3-linked galactosyl lipids. The natural acceptor substrate may be cell surface oligosaccharides in lipooligosaccharide (LOS), whose sialylation has been demonstrated vital for the virulence of P.multocida. In Pasteurella multocida (strain Pm70), this protein is CMP-N-acetylneuraminate:beta-galactoside alpha-2,3-sialyltransferase (lst).